Consider the following 468-residue polypeptide: Replication factor C large subunit (468 aa).

50-57 (GPPGSGKT) is a binding site for ATP. Residues 422–456 (EEKAVEEKVEEEEAEEEEEEERKEEEKPKAEKKKG) form a disordered region. The segment covering 429-444 (KVEEEEAEEEEEEERK) has biased composition (acidic residues).

Belongs to the activator 1 small subunits family. RfcL subfamily. As to quaternary structure, heteromultimer composed of small subunits (RfcS) and large subunits (RfcL).

Its function is as follows. Part of the RFC clamp loader complex which loads the PCNA sliding clamp onto DNA. This Pyrococcus horikoshii (strain ATCC 700860 / DSM 12428 / JCM 9974 / NBRC 100139 / OT-3) protein is Replication factor C large subunit.